A 360-amino-acid polypeptide reads, in one-letter code: Phosphoserine aminotransferase (360 aa).

Arginine 41 contacts L-glutamate. Residues tryptophan 101, threonine 152, aspartate 172, and glutamine 195 each contribute to the pyridoxal 5'-phosphate site. Lysine 196 carries the post-translational modification N6-(pyridoxal phosphate)lysine. 237–238 provides a ligand contact to pyridoxal 5'-phosphate; the sequence is NT.

Belongs to the class-V pyridoxal-phosphate-dependent aminotransferase family. SerC subfamily. In terms of assembly, homodimer. It depends on pyridoxal 5'-phosphate as a cofactor.

It is found in the cytoplasm. It carries out the reaction O-phospho-L-serine + 2-oxoglutarate = 3-phosphooxypyruvate + L-glutamate. The enzyme catalyses 4-(phosphooxy)-L-threonine + 2-oxoglutarate = (R)-3-hydroxy-2-oxo-4-phosphooxybutanoate + L-glutamate. It functions in the pathway amino-acid biosynthesis; L-serine biosynthesis; L-serine from 3-phospho-D-glycerate: step 2/3. The protein operates within cofactor biosynthesis; pyridoxine 5'-phosphate biosynthesis; pyridoxine 5'-phosphate from D-erythrose 4-phosphate: step 3/5. In terms of biological role, catalyzes the reversible conversion of 3-phosphohydroxypyruvate to phosphoserine and of 3-hydroxy-2-oxo-4-phosphonooxybutanoate to phosphohydroxythreonine. The protein is Phosphoserine aminotransferase of Paraburkholderia phymatum (strain DSM 17167 / CIP 108236 / LMG 21445 / STM815) (Burkholderia phymatum).